The primary structure comprises 271 residues: DNA-directed RNA polymerase subunit Rpo3 (271 aa).

This sequence belongs to the archaeal Rpo3/eukaryotic RPB3 RNA polymerase subunit family. As to quaternary structure, part of the RNA polymerase complex.

Its subcellular location is the cytoplasm. The enzyme catalyses RNA(n) + a ribonucleoside 5'-triphosphate = RNA(n+1) + diphosphate. In terms of biological role, DNA-dependent RNA polymerase (RNAP) catalyzes the transcription of DNA into RNA using the four ribonucleoside triphosphates as substrates. The sequence is that of DNA-directed RNA polymerase subunit Rpo3 from Picrophilus torridus (strain ATCC 700027 / DSM 9790 / JCM 10055 / NBRC 100828 / KAW 2/3).